The sequence spans 278 residues: Biotin synthase (278 aa).

The 227-residue stretch at 1-227 (MQIMLCAISN…QSVVMVAGGR (227 aa)) folds into the Radical SAM core domain. The [4Fe-4S] cluster site is built by Cys-16, Cys-20, and Cys-23. [2Fe-2S] cluster-binding residues include Cys-60, Asn-96, and Cys-154.

It belongs to the radical SAM superfamily. Biotin synthase family. Homodimer. [4Fe-4S] cluster is required as a cofactor. It depends on [2Fe-2S] cluster as a cofactor.

It catalyses the reaction (4R,5S)-dethiobiotin + (sulfur carrier)-SH + 2 reduced [2Fe-2S]-[ferredoxin] + 2 S-adenosyl-L-methionine = (sulfur carrier)-H + biotin + 2 5'-deoxyadenosine + 2 L-methionine + 2 oxidized [2Fe-2S]-[ferredoxin]. It participates in cofactor biosynthesis; biotin biosynthesis; biotin from 7,8-diaminononanoate: step 2/2. Its function is as follows. Catalyzes the conversion of dethiobiotin (DTB) to biotin by the insertion of a sulfur atom into dethiobiotin via a radical-based mechanism. This Campylobacter jejuni subsp. jejuni serotype O:2 (strain ATCC 700819 / NCTC 11168) protein is Biotin synthase.